The sequence spans 116 residues: Ribonuclease T (116 aa).

An Exonuclease domain is found at 18–99 (KRAILVGHNS…YDTEKTAELF (82 aa)). The active-site Proton donor/acceptor is the His-86.

The protein belongs to the RNase T family. As to quaternary structure, homodimer.

Functionally, trims short 3' overhangs of a variety of RNA species, leaving a one or two nucleotide 3' overhang. Responsible for the end-turnover of tRNA: specifically removes the terminal AMP residue from uncharged tRNA (tRNA-C-C-A). Also appears to be involved in tRNA biosynthesis. In Azotobacter vinelandii, this protein is Ribonuclease T.